The chain runs to 198 residues: dITP/XTP pyrophosphatase (198 aa).

7-12 contacts substrate; that stretch reads THNPHK. Mg(2+) contacts are provided by glutamate 40 and aspartate 69. The active-site Proton acceptor is aspartate 69. Residues threonine 70, 151–154, lysine 174, and 179–180 each bind substrate; these read FGYD and HR.

It belongs to the HAM1 NTPase family. Homodimer. Requires Mg(2+) as cofactor.

It catalyses the reaction XTP + H2O = XMP + diphosphate + H(+). The catalysed reaction is dITP + H2O = dIMP + diphosphate + H(+). It carries out the reaction ITP + H2O = IMP + diphosphate + H(+). Functionally, pyrophosphatase that catalyzes the hydrolysis of nucleoside triphosphates to their monophosphate derivatives, with a high preference for the non-canonical purine nucleotides XTP (xanthosine triphosphate), dITP (deoxyinosine triphosphate) and ITP. Seems to function as a house-cleaning enzyme that removes non-canonical purine nucleotides from the nucleotide pool, thus preventing their incorporation into DNA/RNA and avoiding chromosomal lesions. The protein is dITP/XTP pyrophosphatase of Thermoanaerobacter sp. (strain X514).